The following is a 352-amino-acid chain: Phospho-N-acetylmuramoyl-pentapeptide-transferase (352 aa).

10 helical membrane-spanning segments follow: residues Tyr-10–Leu-30, Thr-67–Leu-87, Asn-88–Val-108, Leu-129–Asn-149, Tyr-159–Ser-179, Gly-191–Ser-211, Gly-227–Trp-247, Val-255–Val-275, Ile-280–Val-300, and Lys-329–Ile-349.

This sequence belongs to the glycosyltransferase 4 family. MraY subfamily. Mg(2+) serves as cofactor.

It is found in the cell inner membrane. The catalysed reaction is UDP-N-acetyl-alpha-D-muramoyl-L-alanyl-gamma-D-glutamyl-meso-2,6-diaminopimeloyl-D-alanyl-D-alanine + di-trans,octa-cis-undecaprenyl phosphate = di-trans,octa-cis-undecaprenyl diphospho-N-acetyl-alpha-D-muramoyl-L-alanyl-D-glutamyl-meso-2,6-diaminopimeloyl-D-alanyl-D-alanine + UMP. It participates in cell wall biogenesis; peptidoglycan biosynthesis. In terms of biological role, catalyzes the initial step of the lipid cycle reactions in the biosynthesis of the cell wall peptidoglycan: transfers peptidoglycan precursor phospho-MurNAc-pentapeptide from UDP-MurNAc-pentapeptide onto the lipid carrier undecaprenyl phosphate, yielding undecaprenyl-pyrophosphoryl-MurNAc-pentapeptide, known as lipid I. The protein is Phospho-N-acetylmuramoyl-pentapeptide-transferase of Campylobacter lari (strain RM2100 / D67 / ATCC BAA-1060).